A 72-amino-acid polypeptide reads, in one-letter code: UPF0154 protein BLi02038/BL02936 (72 aa).

A helical transmembrane segment spans residues Trp4–Ile24.

This sequence belongs to the UPF0154 family.

Its subcellular location is the cell membrane. The sequence is that of UPF0154 protein BLi02038/BL02936 from Bacillus licheniformis (strain ATCC 14580 / DSM 13 / JCM 2505 / CCUG 7422 / NBRC 12200 / NCIMB 9375 / NCTC 10341 / NRRL NRS-1264 / Gibson 46).